Here is a 202-residue protein sequence, read N- to C-terminus: HTH-type transcriptional regulator BetI 1 (202 aa).

In terms of domain architecture, HTH tetR-type spans 8–68 (PIRRRQLIQA…SAMRQILWDL (61 aa)). The segment at residues 31-50 (TIARIAKRAGVSAGIISHYF) is a DNA-binding region (H-T-H motif).

The protein operates within amine and polyamine biosynthesis; betaine biosynthesis via choline pathway [regulation]. Functionally, repressor involved in the biosynthesis of the osmoprotectant glycine betaine. It represses transcription of the choline transporter BetT and the genes of BetAB involved in the synthesis of glycine betaine. This Chromohalobacter salexigens (strain ATCC BAA-138 / DSM 3043 / CIP 106854 / NCIMB 13768 / 1H11) protein is HTH-type transcriptional regulator BetI 1.